The following is a 153-amino-acid chain: UPAR/Ly6 domain-containing protein cold (153 aa).

Positions 1 to 25 (MKSWEIAVVLVAAVYLCSQVNFVAG) are cleaved as a signal peptide. Over 26–130 (LECYVCSNQT…FVISGAPSRQ (105 aa)) the chain is Extracellular. Intrachain disulfides connect C28/C55, C31/C41, C48/C81, C87/C112, C99/C109, and C113/C118. A glycan (N-linked (GlcNAc...) asparagine) is linked at N33. S124 carries the GPI-anchor amidated serine lipid modification. A propeptide spans 125–153 (GAPSRQGYGVCLTLLTALLGLGSWLIPRS) (removed in mature form). Residues 131–151 (GYGVCLTLLTALLGLGSWLIP) traverse the membrane as a helical segment. Residues 152–153 (RS) lie on the Cytoplasmic side of the membrane.

The protein belongs to the snake toxin-like superfamily. GPI-anchored. Expressed in all tissues that form septate junctions, including hindgut, trachea, epidermis and dorsal pouch. Expressed in subperineurial glial cells that form the hemolymph-brain barrier of the central nervous system.

It localises to the endosome membrane. Its subcellular location is the endoplasmic reticulum membrane. The protein resides in the cell membrane. The protein localises to the cell junction. It is found in the septate junction. Required for septate junction assembly, possibly by organizing the preassembly and transport of septate junction proteins such as dlg1/disks large 1 and Nrx-IV/Neurexin-IV. Involved in paracellular barrier functions of trachea, hindgut and salivary gland mediated by epithelial cell septate junctions. Involved in paracellular barrier functions of the hemolymph-brain barrier (insect blood-brain barrier) mediated by glial cell septate junctions. Required for maintenance of septate junctions in imaginal disk epithelial cells. Involved in the epithelial cell wound-healing response. Directly or indirectly mediates cell-cell adhesion during septate junction formation. This is UPAR/Ly6 domain-containing protein cold from Drosophila melanogaster (Fruit fly).